The sequence spans 245 residues: tRNA (guanine-N(7)-)-methyltransferase (245 aa).

Positions 71, 96, 123, and 146 each coordinate S-adenosyl-L-methionine. Residue D146 is part of the active site. K150 serves as a coordination point for substrate. Positions 152-157 are interaction with RNA; the sequence is KHNKRR. Substrate contacts are provided by residues D182 and 224–227; that span reads TKFE.

This sequence belongs to the class I-like SAM-binding methyltransferase superfamily. TrmB family.

It catalyses the reaction guanosine(46) in tRNA + S-adenosyl-L-methionine = N(7)-methylguanosine(46) in tRNA + S-adenosyl-L-homocysteine. It functions in the pathway tRNA modification; N(7)-methylguanine-tRNA biosynthesis. Its function is as follows. Catalyzes the formation of N(7)-methylguanine at position 46 (m7G46) in tRNA. The sequence is that of tRNA (guanine-N(7)-)-methyltransferase from Albidiferax ferrireducens (strain ATCC BAA-621 / DSM 15236 / T118) (Rhodoferax ferrireducens).